The primary structure comprises 71 residues: Exodeoxyribonuclease 7 small subunit (71 aa).

It belongs to the XseB family. As to quaternary structure, heterooligomer composed of large and small subunits.

It localises to the cytoplasm. It carries out the reaction Exonucleolytic cleavage in either 5'- to 3'- or 3'- to 5'-direction to yield nucleoside 5'-phosphates.. In terms of biological role, bidirectionally degrades single-stranded DNA into large acid-insoluble oligonucleotides, which are then degraded further into small acid-soluble oligonucleotides. The sequence is that of Exodeoxyribonuclease 7 small subunit from Endomicrobium trichonymphae.